A 257-amino-acid polypeptide reads, in one-letter code: MFGKLVRPGRPMSSGVRELMWRVLRGTSLNNYSAAQLRFMHLILCKMYNYALNVLLFRETLANCACRDDCVLGRKVPPEIWRLVYDGCKEMGVTDEMLGEERRRAQLWMHFNANRALLEGLTNYVTHRLGVTHAVSVCSNNITDGNYLFNLGSVLPSRILMSIAYCLVFWGRQECEPWVRHFSSKVFILYLMVSGHLRLEGSFADASAACGYQGVVEVVMRDMRGYRGVEGPVAPGGEAPPTDTLDYLFVFNNNVLF.

The protein belongs to the herpesviridae UL79 family.

This chain is Gene 18 protein (18), found in Equus caballus (Horse).